The sequence spans 458 residues: Bifunctional protein GlmU (458 aa).

Positions 1–229 (MNKFAIVLAA…FDESLGVNDR (229 aa)) are pyrophosphorylase. UDP-N-acetyl-alpha-D-glucosamine-binding positions include 8–11 (LAAG), Lys22, Gln72, and 77–78 (GT). Mg(2+) is bound at residue Asp102. UDP-N-acetyl-alpha-D-glucosamine-binding residues include Gly139, Glu154, Asn169, and Asn227. Asn227 is a binding site for Mg(2+). A linker region spans residues 230–250 (VALSQAEGTMRKRINHEHMVN). Residues 251–458 (GVTLIDPATT…AKKMPHYRGQ (208 aa)) are N-acetyltransferase. The UDP-N-acetyl-alpha-D-glucosamine site is built by Arg332 and Lys350. His362 functions as the Proton acceptor in the catalytic mechanism. Tyr365 and Asn376 together coordinate UDP-N-acetyl-alpha-D-glucosamine. Acetyl-CoA contacts are provided by Ala379, Ser404, Ala422, and Arg439.

It in the N-terminal section; belongs to the N-acetylglucosamine-1-phosphate uridyltransferase family. In the C-terminal section; belongs to the transferase hexapeptide repeat family. As to quaternary structure, homotrimer. It depends on Mg(2+) as a cofactor.

Its subcellular location is the cytoplasm. It carries out the reaction alpha-D-glucosamine 1-phosphate + acetyl-CoA = N-acetyl-alpha-D-glucosamine 1-phosphate + CoA + H(+). The enzyme catalyses N-acetyl-alpha-D-glucosamine 1-phosphate + UTP + H(+) = UDP-N-acetyl-alpha-D-glucosamine + diphosphate. Its pathway is nucleotide-sugar biosynthesis; UDP-N-acetyl-alpha-D-glucosamine biosynthesis; N-acetyl-alpha-D-glucosamine 1-phosphate from alpha-D-glucosamine 6-phosphate (route II): step 2/2. It participates in nucleotide-sugar biosynthesis; UDP-N-acetyl-alpha-D-glucosamine biosynthesis; UDP-N-acetyl-alpha-D-glucosamine from N-acetyl-alpha-D-glucosamine 1-phosphate: step 1/1. It functions in the pathway bacterial outer membrane biogenesis; LPS lipid A biosynthesis. Its function is as follows. Catalyzes the last two sequential reactions in the de novo biosynthetic pathway for UDP-N-acetylglucosamine (UDP-GlcNAc). The C-terminal domain catalyzes the transfer of acetyl group from acetyl coenzyme A to glucosamine-1-phosphate (GlcN-1-P) to produce N-acetylglucosamine-1-phosphate (GlcNAc-1-P), which is converted into UDP-GlcNAc by the transfer of uridine 5-monophosphate (from uridine 5-triphosphate), a reaction catalyzed by the N-terminal domain. The chain is Bifunctional protein GlmU from Lactococcus lactis subsp. cremoris (strain SK11).